Reading from the N-terminus, the 220-residue chain is ATP synthase F(0) complex subunit a (220 aa).

6 helical membrane passes run 12 to 32, 69 to 89, 91 to 111, 130 to 150, 158 to 178, and 183 to 203; these read PTLL…TLLP, WAMI…FTPT, QLSL…LLGL, LLIP…PFAL, LTAG…LLPM, and ALLT…VAMI.

Belongs to the ATPase A chain family. As to quaternary structure, component of the ATP synthase complex composed at least of ATP5F1A/subunit alpha, ATP5F1B/subunit beta, ATP5MC1/subunit c (homooctomer), MT-ATP6/subunit a, MT-ATP8/subunit 8, ATP5ME/subunit e, ATP5MF/subunit f, ATP5MG/subunit g, ATP5MK/subunit k, ATP5MJ/subunit j, ATP5F1C/subunit gamma, ATP5F1D/subunit delta, ATP5F1E/subunit epsilon, ATP5PF/subunit F6, ATP5PB/subunit b, ATP5PD/subunit d, ATP5PO/subunit OSCP. ATP synthase complex consists of a soluble F(1) head domain (subunits alpha(3) and beta(3)) - the catalytic core - and a membrane F(0) domain - the membrane proton channel (subunits c, a, 8, e, f, g, k and j). These two domains are linked by a central stalk (subunits gamma, delta, and epsilon) rotating inside the F1 region and a stationary peripheral stalk (subunits F6, b, d, and OSCP). Interacts with DNAJC30; interaction is direct.

It localises to the mitochondrion inner membrane. The catalysed reaction is H(+)(in) = H(+)(out). Subunit a, of the mitochondrial membrane ATP synthase complex (F(1)F(0) ATP synthase or Complex V) that produces ATP from ADP in the presence of a proton gradient across the membrane which is generated by electron transport complexes of the respiratory chain. ATP synthase complex consist of a soluble F(1) head domain - the catalytic core - and a membrane F(1) domain - the membrane proton channel. These two domains are linked by a central stalk rotating inside the F(1) region and a stationary peripheral stalk. During catalysis, ATP synthesis in the catalytic domain of F(1) is coupled via a rotary mechanism of the central stalk subunits to proton translocation. With the subunit c (ATP5MC1), forms the proton-conducting channel in the F(0) domain, that contains two crucial half-channels (inlet and outlet) that facilitate proton movement from the mitochondrial intermembrane space (IMS) into the matrix. Protons are taken up via the inlet half-channel and released through the outlet half-channel, following a Grotthuss mechanism. The sequence is that of ATP synthase F(0) complex subunit a from Latimeria chalumnae (Coelacanth).